We begin with the raw amino-acid sequence, 638 residues long: 1-deoxy-D-xylulose-5-phosphate synthase (638 aa).

Residues histidine 75 and 116–118 contribute to the thiamine diphosphate site; that span reads AHS. Aspartate 147 provides a ligand contact to Mg(2+). Thiamine diphosphate-binding positions include 148 to 149, asparagine 177, tyrosine 288, and glutamate 370; that span reads GA. A Mg(2+)-binding site is contributed by asparagine 177.

This sequence belongs to the transketolase family. DXPS subfamily. Homodimer. Mg(2+) serves as cofactor. Requires thiamine diphosphate as cofactor.

The catalysed reaction is D-glyceraldehyde 3-phosphate + pyruvate + H(+) = 1-deoxy-D-xylulose 5-phosphate + CO2. It functions in the pathway metabolic intermediate biosynthesis; 1-deoxy-D-xylulose 5-phosphate biosynthesis; 1-deoxy-D-xylulose 5-phosphate from D-glyceraldehyde 3-phosphate and pyruvate: step 1/1. Its function is as follows. Catalyzes the acyloin condensation reaction between C atoms 2 and 3 of pyruvate and glyceraldehyde 3-phosphate to yield 1-deoxy-D-xylulose-5-phosphate (DXP). This Cupriavidus pinatubonensis (strain JMP 134 / LMG 1197) (Cupriavidus necator (strain JMP 134)) protein is 1-deoxy-D-xylulose-5-phosphate synthase.